The primary structure comprises 316 residues: Aspartate carbamoyltransferase catalytic subunit (316 aa).

Positions 56 and 57 each coordinate carbamoyl phosphate. Lysine 84 is a binding site for L-aspartate. Positions 106, 139, and 142 each coordinate carbamoyl phosphate. L-aspartate-binding residues include arginine 172 and arginine 226. Residues glycine 267 and proline 268 each coordinate carbamoyl phosphate.

Belongs to the aspartate/ornithine carbamoyltransferase superfamily. ATCase family. Heterododecamer (2C3:3R2) of six catalytic PyrB chains organized as two trimers (C3), and six regulatory PyrI chains organized as three dimers (R2).

It catalyses the reaction carbamoyl phosphate + L-aspartate = N-carbamoyl-L-aspartate + phosphate + H(+). Its pathway is pyrimidine metabolism; UMP biosynthesis via de novo pathway; (S)-dihydroorotate from bicarbonate: step 2/3. Functionally, catalyzes the condensation of carbamoyl phosphate and aspartate to form carbamoyl aspartate and inorganic phosphate, the committed step in the de novo pyrimidine nucleotide biosynthesis pathway. The polypeptide is Aspartate carbamoyltransferase catalytic subunit (Mycobacterium sp. (strain JLS)).